Consider the following 686-residue polypeptide: Myb-related protein B (686 aa).

A disordered region spans residues Met1–Gly28. HTH myb-type domains are found at residues Arg26–Leu77, Asn78–Val133, and Lys134–Val184. DNA-binding regions (H-T-H motif) lie at residues Trp54 to Leu77, Trp106 to Leu129, and Trp157 to Ile180. Disordered regions lie at residues Cys315 to Tyr355 and Tyr493 to Tyr512. Residues Pro326–Ser343 are compositionally biased toward low complexity.

Component of the DREAM complex. In terms of tissue distribution, expressed in hematopoietic and non hematopoietic cells.

It is found in the nucleus. Its function is as follows. Represses v-myb- and c-myb-mediated activation of the mim-1 gene, probably by competing with other myb proteins for binding sites. It is an inhibitory member of the myb family. The sequence is that of Myb-related protein B (MYBL2) from Gallus gallus (Chicken).